The primary structure comprises 203 residues: Orotate phosphoribosyltransferase (203 aa).

Residues Arg-94, Lys-98, His-100, and 120–128 (EDLISTGGS) contribute to the 5-phospho-alpha-D-ribose 1-diphosphate site. Ser-124 is a binding site for orotate.

This sequence belongs to the purine/pyrimidine phosphoribosyltransferase family. PyrE subfamily. As to quaternary structure, homodimer. Requires Mg(2+) as cofactor.

The enzyme catalyses orotidine 5'-phosphate + diphosphate = orotate + 5-phospho-alpha-D-ribose 1-diphosphate. It functions in the pathway pyrimidine metabolism; UMP biosynthesis via de novo pathway; UMP from orotate: step 1/2. In terms of biological role, catalyzes the transfer of a ribosyl phosphate group from 5-phosphoribose 1-diphosphate to orotate, leading to the formation of orotidine monophosphate (OMP). This is Orotate phosphoribosyltransferase from Staphylococcus aureus (strain Mu50 / ATCC 700699).